Here is a 552-residue protein sequence, read N- to C-terminus: Formate--tetrahydrofolate ligase (552 aa).

65-72 provides a ligand contact to ATP; the sequence is TPAGEGKT.

Belongs to the formate--tetrahydrofolate ligase family.

The catalysed reaction is (6S)-5,6,7,8-tetrahydrofolate + formate + ATP = (6R)-10-formyltetrahydrofolate + ADP + phosphate. Its pathway is one-carbon metabolism; tetrahydrofolate interconversion. This chain is Formate--tetrahydrofolate ligase, found in Fervidobacterium nodosum (strain ATCC 35602 / DSM 5306 / Rt17-B1).